The sequence spans 360 residues: Phenylalanine--tRNA ligase alpha subunit (360 aa).

A Mg(2+)-binding site is contributed by E260.

Belongs to the class-II aminoacyl-tRNA synthetase family. Phe-tRNA synthetase alpha subunit type 1 subfamily. As to quaternary structure, tetramer of two alpha and two beta subunits. Mg(2+) is required as a cofactor.

Its subcellular location is the cytoplasm. The enzyme catalyses tRNA(Phe) + L-phenylalanine + ATP = L-phenylalanyl-tRNA(Phe) + AMP + diphosphate + H(+). In Bartonella tribocorum (strain CIP 105476 / IBS 506), this protein is Phenylalanine--tRNA ligase alpha subunit.